Here is a 151-residue protein sequence, read N- to C-terminus: Large-conductance mechanosensitive channel (151 aa).

The next 2 membrane-spanning stretches (helical) occupy residues 14–34 (VVDMAVGIIIGGAFGALVNSL) and 85–105 (GLFVNALIGFLIMAFAVFLLV).

This sequence belongs to the MscL family. Homopentamer.

Its subcellular location is the cell inner membrane. Its function is as follows. Channel that opens in response to stretch forces in the membrane lipid bilayer. May participate in the regulation of osmotic pressure changes within the cell. In Chlorobaculum tepidum (strain ATCC 49652 / DSM 12025 / NBRC 103806 / TLS) (Chlorobium tepidum), this protein is Large-conductance mechanosensitive channel.